A 150-amino-acid polypeptide reads, in one-letter code: Ribonuclease H (150 aa).

Positions 1-141 constitute an RNase H type-1 domain; it reads MKSIEVHTDG…VDVLARNQAI (141 aa). Residues Asp-9, Glu-47, Asp-69, and Asp-133 each contribute to the Mg(2+) site.

This sequence belongs to the RNase H family. In terms of assembly, monomer. Mg(2+) is required as a cofactor.

It localises to the cytoplasm. The catalysed reaction is Endonucleolytic cleavage to 5'-phosphomonoester.. In terms of biological role, endonuclease that specifically degrades the RNA of RNA-DNA hybrids. In Xanthomonas axonopodis pv. citri (strain 306), this protein is Ribonuclease H.